The following is a 599-amino-acid chain: Adenine deaminase (599 aa).

It belongs to the metallo-dependent hydrolases superfamily. Adenine deaminase family. Mn(2+) is required as a cofactor.

The catalysed reaction is adenine + H2O + H(+) = hypoxanthine + NH4(+). This is Adenine deaminase from Clostridium botulinum (strain Loch Maree / Type A3).